Consider the following 89-residue polypeptide: Large ribosomal subunit protein bL27 (89 aa).

The interval 1 to 20 (MAHKKAGGSSRNGRDSESKR) is disordered.

This sequence belongs to the bacterial ribosomal protein bL27 family.

The protein is Large ribosomal subunit protein bL27 of Bartonella bacilliformis (strain ATCC 35685 / KC583 / Herrer 020/F12,63).